A 709-amino-acid chain; its full sequence is Polyribonucleotide nucleotidyltransferase (709 aa).

Mg(2+) contacts are provided by Asp487 and Asp493. The KH domain maps to 554-613 (PRIHTMKISSDKIKDVIGKGGAVIRALCEETGTTIEIEDDGTIKIAATEGAAAKEAIRRI). The S1 motif domain occupies 623–691 (GKIYTGKVMR…RQGRIRLSIK (69 aa)).

The protein belongs to the polyribonucleotide nucleotidyltransferase family. In terms of assembly, component of the RNA degradosome, which is a multiprotein complex involved in RNA processing and mRNA degradation. Mg(2+) serves as cofactor.

It is found in the cytoplasm. It carries out the reaction RNA(n+1) + phosphate = RNA(n) + a ribonucleoside 5'-diphosphate. Involved in mRNA degradation. Catalyzes the phosphorolysis of single-stranded polyribonucleotides processively in the 3'- to 5'-direction. This chain is Polyribonucleotide nucleotidyltransferase, found in Aliivibrio fischeri (strain ATCC 700601 / ES114) (Vibrio fischeri).